The sequence spans 322 residues: MEERSQRRKKKRKLKKWVKVVAGLMAFLVIAAGSVGAYAFVKLNNASKEAHVSLARGEQSVKRIKEFDPGKDSFSVLLLGIDAREKNGETVDQARSDANVLVTFNRKEKTAKMLSIPRDAYVNIPGHGYDKFTHAHAYGGVDLTVKTVEEMLDIPVDYVVESNFTAFEDVVNELNGVKVTVKSDKVIQQIKKDTKGKVVLQKGTHTLDGEEALAYVRTRKADSDLLRGQRQMEVLSAIIDKSKSLSSIPAYDDIVDTMGQNLKMNLSLKDAIGLFPFITSLKSVESIQLTGYDYEPAGVYYFKLNQQKLQEVKKELQNDLGV.

At methionine 1–lysine 19 the chain is on the cytoplasmic side. The helical; Signal-anchor for type II membrane protein transmembrane segment at valine 20–phenylalanine 40 threads the bilayer. Residues valine 41–valine 322 lie on the Extracellular side of the membrane.

Belongs to the LytR/CpsA/Psr (LCP) family. Interacts with MreB.

It localises to the cell membrane. Its pathway is cell wall biogenesis. May catalyze the final step in cell wall teichoic acid biosynthesis, the transfer of the anionic cell wall polymers (APs) from their lipid-linked precursor to the cell wall peptidoglycan (PG). The protein is Polyisoprenyl-teichoic acid--peptidoglycan teichoic acid transferase TagT of Bacillus subtilis (strain 168).